The primary structure comprises 96 residues: Glycine-rich protein DC7.1 (96 aa).

The first 25 residues, 1–25 (MGSKIFLLLGLSIAFALLISSEVAA), serve as a signal peptide directing secretion. Residues 29–66 (SETTTEGASLDGGHHGGGGGGHYSGGGGHGGSHHGGGG) form a disordered region. Tandem repeats lie at residues 42 to 50 (HHGGGGGGH) and 61 to 67 (HHGGGGH). Residues 42–67 (HHGGGGGGHYSGGGGHGGSHHGGGGH) form a 2 approximate repeats of H-H-G(4,6)-H region. The span at 43–66 (HGGGGGGHYSGGGGHGGSHHGGGG) shows a compositional bias: gly residues.

Belongs to the GRP family.

Its function is as follows. May be connected with the initiation of embryogenesis or with the metabolic changes produced by the removal of auxins. This Daucus carota (Wild carrot) protein is Glycine-rich protein DC7.1.